Here is a 267-residue protein sequence, read N- to C-terminus: Small ribosomal subunit protein uS2 (267 aa).

The disordered stretch occupies residues 224–244; the sequence is GRQGEDEDVTEDSFKDNKDAK. Over residues 235–244 the composition is skewed to basic and acidic residues; the sequence is DSFKDNKDAK.

This sequence belongs to the universal ribosomal protein uS2 family.

This is Small ribosomal subunit protein uS2 from Lactiplantibacillus plantarum (strain ATCC BAA-793 / NCIMB 8826 / WCFS1) (Lactobacillus plantarum).